A 230-amino-acid chain; its full sequence is Ribose-5-phosphate isomerase A (230 aa).

Substrate-binding positions include Thr-29–Thr-32, Asp-85–Asp-88, and Lys-98–Gly-101. The active-site Proton acceptor is the Glu-107. Lys-125 is a substrate binding site.

Belongs to the ribose 5-phosphate isomerase family. Homodimer.

It carries out the reaction aldehydo-D-ribose 5-phosphate = D-ribulose 5-phosphate. Its pathway is carbohydrate degradation; pentose phosphate pathway; D-ribose 5-phosphate from D-ribulose 5-phosphate (non-oxidative stage): step 1/1. Its function is as follows. Catalyzes the reversible conversion of ribose-5-phosphate to ribulose 5-phosphate. The sequence is that of Ribose-5-phosphate isomerase A from Staphylococcus haemolyticus (strain JCSC1435).